Consider the following 185-residue polypeptide: Ribosome-recycling factor (185 aa).

Belongs to the RRF family.

The protein localises to the cytoplasm. Its function is as follows. Responsible for the release of ribosomes from messenger RNA at the termination of protein biosynthesis. May increase the efficiency of translation by recycling ribosomes from one round of translation to another. This chain is Ribosome-recycling factor, found in Kocuria rhizophila (strain ATCC 9341 / DSM 348 / NBRC 103217 / DC2201).